Reading from the N-terminus, the 152-residue chain is Large ribosomal subunit protein bL9 (152 aa).

The protein belongs to the bacterial ribosomal protein bL9 family.

Binds to the 23S rRNA. In Crocosphaera subtropica (strain ATCC 51142 / BH68) (Cyanothece sp. (strain ATCC 51142)), this protein is Large ribosomal subunit protein bL9.